A 127-amino-acid chain; its full sequence is Holo-[acyl-carrier-protein] synthase (127 aa).

Mg(2+)-binding residues include Asp8 and Glu56.

Belongs to the P-Pant transferase superfamily. AcpS family. Requires Mg(2+) as cofactor.

The protein resides in the cytoplasm. It carries out the reaction apo-[ACP] + CoA = holo-[ACP] + adenosine 3',5'-bisphosphate + H(+). Transfers the 4'-phosphopantetheine moiety from coenzyme A to a Ser of acyl-carrier-protein. The protein is Holo-[acyl-carrier-protein] synthase of Caldanaerobacter subterraneus subsp. tengcongensis (strain DSM 15242 / JCM 11007 / NBRC 100824 / MB4) (Thermoanaerobacter tengcongensis).